Reading from the N-terminus, the 171-residue chain is Peptide deformylase (171 aa).

Fe cation is bound by residues Cys-91 and His-133. Residue Glu-134 is part of the active site. His-137 contributes to the Fe cation binding site.

It belongs to the polypeptide deformylase family. It depends on Fe(2+) as a cofactor.

The catalysed reaction is N-terminal N-formyl-L-methionyl-[peptide] + H2O = N-terminal L-methionyl-[peptide] + formate. In terms of biological role, removes the formyl group from the N-terminal Met of newly synthesized proteins. Requires at least a dipeptide for an efficient rate of reaction. N-terminal L-methionine is a prerequisite for activity but the enzyme has broad specificity at other positions. The chain is Peptide deformylase from Haemophilus ducreyi (strain 35000HP / ATCC 700724).